Reading from the N-terminus, the 229-residue chain is Urease accessory protein UreF (229 aa).

Belongs to the UreF family. UreD, UreF and UreG form a complex that acts as a GTP-hydrolysis-dependent molecular chaperone, activating the urease apoprotein by helping to assemble the nickel containing metallocenter of UreC. The UreE protein probably delivers the nickel.

It localises to the cytoplasm. Its function is as follows. Required for maturation of urease via the functional incorporation of the urease nickel metallocenter. This is Urease accessory protein UreF from Corynebacterium efficiens (strain DSM 44549 / YS-314 / AJ 12310 / JCM 11189 / NBRC 100395).